The following is a 243-amino-acid chain: Small ribosomal subunit protein uS2 (243 aa).

Belongs to the universal ribosomal protein uS2 family.

The polypeptide is Small ribosomal subunit protein uS2 (Pseudoalteromonas atlantica (strain T6c / ATCC BAA-1087)).